We begin with the raw amino-acid sequence, 548 residues long: MFS-type transporter TOXA (548 aa).

Polar residues predominate over residues 1 to 12 (MDEQIVSASSNV). The interval 1–33 (MDEQIVSASSNVKDGVEKQPVKDREDVDANVVP) is disordered. Basic and acidic residues predominate over residues 14-27 (DGVEKQPVKDREDV). Transmembrane regions (helical) follow at residues 43-63 (ISLI…FLGA), 85-105 (AVAW…PLFG), 114-134 (KWLF…CALA), 146-166 (VAGI…ALIV), 177-197 (MIGA…GAIA), 204-224 (WCFW…LFFF), 250-270 (IGAG…QWGG), 280-300 (VVAL…HQYW), 316-336 (GFLL…AALY), 357-377 (MLPI…TISF), 382-402 (APFI…LYTF), 411-431 (IIGY…QAFI), 444-464 (YASA…LCVC), and 518-538 (FLVA…LSWA).

It belongs to the major facilitator superfamily. TCR/Tet family.

Its subcellular location is the membrane. In terms of biological role, MFS-type transporter; part of the diffuse TOX2 gene cluster that mediates the biosynthesis of the HC-toxin, cyclic tetrapeptide of structure cyclo(D-Pro-L-Ala-D-Ala-L-Aeo), where Aeo stands for 2-amino-9,10-epoxi-8-oxodecanoic acid. HC-toxin is a determinant of specificity and virulence in the interaction between the producing fungus and its host, maize. TOXA acts as a HC-toxin efflux pump which contributes to self-protection against HC-toxin and/or the secretion of HC-toxin into the extracellular milieu. The chain is MFS-type transporter TOXA from Cochliobolus carbonum (Maize leaf spot fungus).